Reading from the N-terminus, the 251-residue chain is Probable transcriptional regulatory protein cbdbA400 (251 aa).

This sequence belongs to the TACO1 family.

It is found in the cytoplasm. This Dehalococcoides mccartyi (strain CBDB1) protein is Probable transcriptional regulatory protein cbdbA400.